We begin with the raw amino-acid sequence, 482 residues long: UDP-N-acetylmuramoyl-L-alanyl-D-glutamate--2,6-diaminopimelate ligase (482 aa).

Leu28 and Ser30 together coordinate UDP-N-acetyl-alpha-D-muramoyl-L-alanyl-D-glutamate. Residue 108-114 (GTNGKTT) participates in ATP binding. UDP-N-acetyl-alpha-D-muramoyl-L-alanyl-D-glutamate contacts are provided by residues 150–151 (TT), Ser177, Gln183, and Arg185. Lys217 bears the N6-carboxylysine mark. Residues Arg372, 396–399 (DNPR), Gly447, and Glu451 each bind meso-2,6-diaminopimelate. The Meso-diaminopimelate recognition motif signature appears at 396-399 (DNPR).

The protein belongs to the MurCDEF family. MurE subfamily. It depends on Mg(2+) as a cofactor. Post-translationally, carboxylation is probably crucial for Mg(2+) binding and, consequently, for the gamma-phosphate positioning of ATP.

The protein resides in the cytoplasm. The catalysed reaction is UDP-N-acetyl-alpha-D-muramoyl-L-alanyl-D-glutamate + meso-2,6-diaminopimelate + ATP = UDP-N-acetyl-alpha-D-muramoyl-L-alanyl-gamma-D-glutamyl-meso-2,6-diaminopimelate + ADP + phosphate + H(+). It participates in cell wall biogenesis; peptidoglycan biosynthesis. Functionally, catalyzes the addition of meso-diaminopimelic acid to the nucleotide precursor UDP-N-acetylmuramoyl-L-alanyl-D-glutamate (UMAG) in the biosynthesis of bacterial cell-wall peptidoglycan. The polypeptide is UDP-N-acetylmuramoyl-L-alanyl-D-glutamate--2,6-diaminopimelate ligase (Aquifex aeolicus (strain VF5)).